We begin with the raw amino-acid sequence, 618 residues long: uncharacterized protein (618 aa).

A signal peptide spans 1–29 (MSFLVLPPEVNSALMFAGAGSGPTLAAAA). The interval 598 to 618 (SGDNSSGGFNAGNDQSGFFDG) is disordered.

The protein belongs to the mycobacterial PPE family.

This is an uncharacterized protein from Mycobacterium tuberculosis (strain ATCC 25618 / H37Rv).